A 130-amino-acid chain; its full sequence is RutC family protein in leuC 5'region (130 aa).

It belongs to the RutC family.

The protein is RutC family protein in leuC 5'region of Leuconostoc mesenteroides subsp. cremoris.